A 115-amino-acid chain; its full sequence is T cell receptor beta variable 7-8 (115 aa).

A signal peptide spans 1 to 21 (MGTRLLCWVVLGFLGTDHTGA). Residues 22–115 (GVSQSPRYKV…SAVYLCASSL (94 aa)) form the Ig-like domain. A disulfide bond links Cys42 and Cys111.

Alpha-beta TR is a heterodimer composed of an alpha and beta chain; disulfide-linked. The alpha-beta TR is associated with the transmembrane signaling CD3 coreceptor proteins to form the TR-CD3 (TcR or TCR). The assembly of alpha-beta TR heterodimers with CD3 occurs in the endoplasmic reticulum where a single alpha-beta TR heterodimer associates with one CD3D-CD3E heterodimer, one CD3G-CD3E heterodimer and one CD247 homodimer forming a stable octameric structure. CD3D-CD3E and CD3G-CD3E heterodimers preferentially associate with TR alpha and TR beta chains, respectively. The association of the CD247 homodimer is the last step of TcR assembly in the endoplasmic reticulum and is required for transport to the cell surface.

It is found in the cell membrane. Its function is as follows. V region of the variable domain of T cell receptor (TR) beta chain that participates in the antigen recognition. Alpha-beta T cell receptors are antigen specific receptors which are essential to the immune response and are present on the cell surface of T lymphocytes. Recognize peptide-major histocompatibility (MH) (pMH) complexes that are displayed by antigen presenting cells (APC), a prerequisite for efficient T cell adaptive immunity against pathogens. Binding of alpha-beta TR to pMH complex initiates TR-CD3 clustering on the cell surface and intracellular activation of LCK that phosphorylates the ITAM motifs of CD3G, CD3D, CD3E and CD247 enabling the recruitment of ZAP70. In turn ZAP70 phosphorylates LAT, which recruits numerous signaling molecules to form the LAT signalosome. The LAT signalosome propagates signal branching to three major signaling pathways, the calcium, the mitogen-activated protein kinase (MAPK) kinase and the nuclear factor NF-kappa-B (NF-kB) pathways, leading to the mobilization of transcription factors that are critical for gene expression and essential for T cell growth and differentiation. The T cell repertoire is generated in the thymus, by V-(D)-J rearrangement. This repertoire is then shaped by intrathymic selection events to generate a peripheral T cell pool of self-MH restricted, non-autoaggressive T cells. Post-thymic interaction of alpha-beta TR with the pMH complexes shapes TR structural and functional avidity. The chain is T cell receptor beta variable 7-8 from Homo sapiens (Human).